A 354-amino-acid polypeptide reads, in one-letter code: Serum paraoxonase/lactonase 3 (354 aa).

A disulfide bridge connects residues C42 and C352. Residue N50 is glycosylated (N-linked (GlcNAc...) asparagine). Positions 53 and 54 each coordinate Ca(2+). The active-site Proton acceptor is H114. I116 is a Ca(2+) binding site. S165 is modified (phosphoserine). Positions 167, 168, 223, 268, and 269 each coordinate Ca(2+). Residue N269 is glycosylated (N-linked (GlcNAc...) asparagine).

Belongs to the paraoxonase family. In terms of assembly, homodimer. The cofactor is Ca(2+). Post-translationally, glycosylated. In terms of processing, the signal sequence is not cleaved.

The protein localises to the secreted. The protein resides in the extracellular space. It catalyses the reaction a phenyl acetate + H2O = a phenol + acetate + H(+). It carries out the reaction An aryl dialkyl phosphate + H2O = dialkyl phosphate + an aryl alcohol.. The catalysed reaction is an N-acyl-L-homoserine lactone + H2O = an N-acyl-L-homoserine + H(+). Its function is as follows. Has low activity towards the organophosphate paraxon and aromatic carboxylic acid esters. Rapidly hydrolyzes lactones such as statin prodrugs (e.g. lovastatin). Hydrolyzes aromatic lactones and 5- or 6-member ring lactones with aliphatic substituents but not simple lactones or those with polar substituents. In Oryctolagus cuniculus (Rabbit), this protein is Serum paraoxonase/lactonase 3 (PON3).